Here is a 299-residue protein sequence, read N- to C-terminus: Probable lipid kinase YegS-like (299 aa).

The 129-residue stretch at 1–129 folds into the DAGKc domain; it reads MSERKALLIL…IDLGEVGGQM (129 aa). ATP contacts are provided by residues threonine 39, 65 to 71, and threonine 92; that span reads GDGTLRD. Leucine 210, aspartate 213, and leucine 215 together coordinate Mg(2+). Glutamate 268 (proton acceptor) is an active-site residue.

It belongs to the diacylglycerol/lipid kinase family. YegS lipid kinase subfamily. Mg(2+) serves as cofactor. Ca(2+) is required as a cofactor.

The protein localises to the cytoplasm. Its function is as follows. Probably phosphorylates lipids; the in vivo substrate is unknown. This Pseudomonas fluorescens (strain ATCC BAA-477 / NRRL B-23932 / Pf-5) protein is Probable lipid kinase YegS-like.